A 372-amino-acid polypeptide reads, in one-letter code: Glutamate 5-kinase (372 aa).

ATP is bound at residue K14. Substrate is bound by residues S54, D141, and N153. 173–174 (TD) contributes to the ATP binding site. The PUA domain occupies 280-358 (RGTLVLDAGA…EAIESILGYS (79 aa)).

Belongs to the glutamate 5-kinase family.

Its subcellular location is the cytoplasm. It carries out the reaction L-glutamate + ATP = L-glutamyl 5-phosphate + ADP. It participates in amino-acid biosynthesis; L-proline biosynthesis; L-glutamate 5-semialdehyde from L-glutamate: step 1/2. In terms of biological role, catalyzes the transfer of a phosphate group to glutamate to form L-glutamate 5-phosphate. The protein is Glutamate 5-kinase of Pseudomonas putida (strain ATCC 700007 / DSM 6899 / JCM 31910 / BCRC 17059 / LMG 24140 / F1).